The sequence spans 179 residues: Interleukin-10 (179 aa).

Residues 1-19 (MPSPALLCCCLVLLAGVGA) form the signal peptide. Disulfide bonds link Cys31/Cys127 and Cys81/Cys133. Asn135 is a glycosylation site (N-linked (GlcNAc...) asparagine).

This sequence belongs to the IL-10 family. In terms of assembly, homodimer. Interacts with IL10RA and IL10RB.

Its subcellular location is the secreted. Major immune regulatory cytokine that acts on many cells of the immune system where it has profound anti-inflammatory functions, limiting excessive tissue disruption caused by inflammation. Mechanistically, IL10 binds to its heterotetrameric receptor comprising IL10RA and IL10RB leading to JAK1 and STAT2-mediated phosphorylation of STAT3. In turn, STAT3 translocates to the nucleus where it drives expression of anti-inflammatory mediators. Targets antigen-presenting cells (APCs) such as macrophages and monocytes and inhibits their release of pro-inflammatory cytokines including granulocyte-macrophage colony-stimulating factor /GM-CSF, granulocyte colony-stimulating factor/G-CSF, IL-1 alpha, IL-1 beta, IL-6, IL-8 and TNF-alpha. Also interferes with antigen presentation by reducing the expression of MHC-class II and co-stimulatory molecules, thereby inhibiting their ability to induce T cell activation. In addition, controls the inflammatory response of macrophages by reprogramming essential metabolic pathways including mTOR signaling. The polypeptide is Interleukin-10 (IL10) (Vulpes vulpes (Red fox)).